The chain runs to 227 residues: Dephospho-CoA kinase (227 aa).

A DPCK domain is found at 31–227 (KIGLTGGIGS…EKLFQFINCL (197 aa)). Residue 39 to 44 (GSGKST) coordinates ATP.

This sequence belongs to the CoaE family.

It is found in the cytoplasm. The enzyme catalyses 3'-dephospho-CoA + ATP = ADP + CoA + H(+). It functions in the pathway cofactor biosynthesis; coenzyme A biosynthesis; CoA from (R)-pantothenate: step 5/5. In terms of biological role, catalyzes the phosphorylation of the 3'-hydroxyl group of dephosphocoenzyme A to form coenzyme A. The protein is Dephospho-CoA kinase of Clostridium tetani (strain Massachusetts / E88).